The following is a 256-amino-acid chain: DNA repair protein RecO (256 aa).

The protein belongs to the RecO family.

Involved in DNA repair and RecF pathway recombination. In Streptococcus pneumoniae serotype 2 (strain D39 / NCTC 7466), this protein is DNA repair protein RecO.